Here is a 185-residue protein sequence, read N- to C-terminus: Ribosome-recycling factor (185 aa).

The protein belongs to the RRF family.

The protein resides in the cytoplasm. Functionally, responsible for the release of ribosomes from messenger RNA at the termination of protein biosynthesis. May increase the efficiency of translation by recycling ribosomes from one round of translation to another. This chain is Ribosome-recycling factor, found in Nitrosomonas eutropha (strain DSM 101675 / C91 / Nm57).